Consider the following 597-residue polypeptide: Uptake hydrogenase large subunit (597 aa).

Residues cysteine 75, cysteine 78, cysteine 576, and cysteine 579 each contribute to the Ni(2+) site.

The protein belongs to the [NiFe]/[NiFeSe] hydrogenase large subunit family. As to quaternary structure, heterodimer of a large and a small subunit. Ni(2+) is required as a cofactor.

Its subcellular location is the cell membrane. The catalysed reaction is H2 + A = AH2. In terms of biological role, this enzyme recycles the H(2) produced by nitrogenase to increase the production of ATP and to protect nitrogenase against inhibition or damage by O(2) under carbon- or phosphate-limited conditions. This Rhodobacter capsulatus (Rhodopseudomonas capsulata) protein is Uptake hydrogenase large subunit (hupB).